The primary structure comprises 298 residues: MFKSGFVAILGRPNVGKSTFLNHVMGQKIAIMSDKAQTTRNKIMGIYTTETEQIVFIDTPGIHKPKTALGDFMVESAYSTLREVETVLFMVPADEKRGKGDDMIIERLKAAKIPVILVINKIDKVHPDQLLAQIDDFRSQMEFKEVVPISALEGNNVPTLIKLLTDNLEEGFQYFPEDQITDHPERFLVSEMIREKVLHLTQQEVPHSVAVVVESMKRDEETDKVHIRATIMVERDSQKGIIIGKQGAMLKKIGKMARRDIELMLGDKVYLETWVKVKKNWRDKKLDLADFGYNEKEY.

The Era-type G domain occupies 3 to 170 (KSGFVAILGR…IKLLTDNLEE (168 aa)). The tract at residues 11-18 (GRPNVGKS) is G1. A GTP-binding site is contributed by 11 to 18 (GRPNVGKS). Positions 37-41 (QTTRN) are G2. Positions 58–61 (DTPG) are G3. GTP contacts are provided by residues 58–62 (DTPGI) and 120–123 (NKID). The tract at residues 120–123 (NKID) is G4. Residues 149 to 151 (ISA) form a G5 region. One can recognise a KH type-2 domain in the interval 201-279 (TQQEVPHSVA…YLETWVKVKK (79 aa)).

The protein belongs to the TRAFAC class TrmE-Era-EngA-EngB-Septin-like GTPase superfamily. Era GTPase family. In terms of assembly, monomer.

It is found in the cytoplasm. It localises to the cell membrane. An essential GTPase that binds both GDP and GTP, with rapid nucleotide exchange. Plays a role in 16S rRNA processing and 30S ribosomal subunit biogenesis and possibly also in cell cycle regulation and energy metabolism. This is GTPase Era from Streptococcus pyogenes serotype M4 (strain MGAS10750).